The primary structure comprises 283 residues: Pantothenate synthetase (283 aa).

30–37 (MGNLHDGH) provides a ligand contact to ATP. Histidine 37 (proton donor) is an active-site residue. Glutamine 61 contributes to the (R)-pantoate binding site. Residue glutamine 61 coordinates beta-alanine. Residue 149–152 (GEKD) participates in ATP binding. Residue glutamine 155 coordinates (R)-pantoate. 186–189 (LSSR) contributes to the ATP binding site.

The protein belongs to the pantothenate synthetase family. Homodimer.

It is found in the cytoplasm. It catalyses the reaction (R)-pantoate + beta-alanine + ATP = (R)-pantothenate + AMP + diphosphate + H(+). The protein operates within cofactor biosynthesis; (R)-pantothenate biosynthesis; (R)-pantothenate from (R)-pantoate and beta-alanine: step 1/1. Functionally, catalyzes the condensation of pantoate with beta-alanine in an ATP-dependent reaction via a pantoyl-adenylate intermediate. This Escherichia coli O6:H1 (strain CFT073 / ATCC 700928 / UPEC) protein is Pantothenate synthetase.